A 238-amino-acid polypeptide reads, in one-letter code: Ribosomal RNA small subunit methyltransferase G (238 aa).

S-adenosyl-L-methionine-binding positions include Gly99, Leu104, Asp122 to Thr124, Val150 to Glu151, and Arg164.

Belongs to the methyltransferase superfamily. RNA methyltransferase RsmG family.

It localises to the cytoplasm. Functionally, specifically methylates the N7 position of a guanine in 16S rRNA. In Chlorobium luteolum (strain DSM 273 / BCRC 81028 / 2530) (Pelodictyon luteolum), this protein is Ribosomal RNA small subunit methyltransferase G.